The primary structure comprises 579 residues: MNKSQEQVSFKDVCVDFTQEEWYLLDPAQKILYRDVILENYSNLVSVGYCITKPEVIFKIEQGEEPWILEKGFPSQCHPERKWKVDDVLESSQENEDDHFWELLFHNNKTVSVENGDRGSKTFNLGTDPVSLRNYPYKICDSCEMNLKNISGLIISKKNCSRKKPDEFNVCEKLLLDIRHEKIPIGEKSYKYDQKRNAINYHQDLSQPSFGQSFEYSKNGQGFHDEAAFFTNKRSQIGETVCKYNECGRTFIESLKLNISQRPHLEMEPYGCSICGKSFCMNLRFGHQRALTKDNPYEYNEYGEIFCDNSAFIIHQGAYTRKILREYKVSDKTWEKSALLKHQIVHMGGKSYDYNENGSNFSKKSHLTQLRRAHTGEKTFECGECGKTFWEKSNLTQHQRTHTGEKPYECTECGKAFCQKPHLTNHQRTHTGEKPYECKQCGKTFCVKSNLTEHQRTHTGEKPYECNACGKSFCHRSALTVHQRTHTGEKPFICNECGKSFCVKSNLIVHQRTHTGEKPYKCNECGKTFCEKSALTKHQRTHTGEKPYECNACGKTFSQRSVLTKHQRIHTRVKALSTS.

The KRAB domain maps to 8-79 (VSFKDVCVDF…EKGFPSQCHP (72 aa)). The C2H2-type 1; degenerate zinc finger occupies 240-264 (TVCKYNECGRTFIESLKLNISQRPH). A Glycyl lysine isopeptide (Lys-Gly) (interchain with G-Cter in SUMO2) cross-link involves residue Lys-341. 7 C2H2-type zinc fingers span residues 380–402 (FECG…QRTH), 408–430 (YECT…QRTH), 436–458 (YECK…QRTH), 464–486 (YECN…QRTH), 492–514 (FICN…QRTH), 520–543 (YKCN…RTHT), and 548–570 (YECN…QRIH).

It belongs to the krueppel C2H2-type zinc-finger protein family.

It localises to the nucleus. In terms of biological role, may be involved in transcriptional regulation. The chain is Zinc finger protein 248 (ZNF248) from Homo sapiens (Human).